We begin with the raw amino-acid sequence, 188 residues long: Probable manganese efflux pump MntP (188 aa).

Helical transmembrane passes span 3–23 (ITAT…ASIG), 66–86 (LEWN…RMII), 106–128 (WLLV…GLAF), 143–163 (ATLI…SIIG), and 168–188 (ILGG…HFHG).

It belongs to the MntP (TC 9.B.29) family.

Its subcellular location is the cell inner membrane. Probably functions as a manganese efflux pump. The protein is Probable manganese efflux pump MntP of Shigella flexneri serotype 5b (strain 8401).